Here is a 438-residue protein sequence, read N- to C-terminus: MPISKIHARYVYDSRGNPTVEVDLVTETGLHRAIVPSGASTGQHEACELRDGDKSKWLGKGVLKAVENVNTVLGPELIKAGLDVKDQTAVDEFLIKLDGTANKTKLGANAILGVSLAVAKAGAAEKGVPLYAHVSDLAGTKKPYVLPVPFQNVLNGGSHAGGRLAFQEFMIVPSAAPSFSEGLRWGAETYHQLKSLAKKKYGQSAGNVGDEGGVAPDIQTAEEALELISEAIEKAGYTGKMKIAMDVASSEFYKEDVKKYDLDFKNPDSDPSNWLTYEQLAALYADLTKKYPIVSIEDPFAEDDWEAWSYFYKTQDIQLVADDLTVTNPIRIKKAIELKAANALLLKVNQIGTLTESIQAAKDSYADGWGVMVSHRSGETEDVTIADIVVGIRAGQIKTGAPARSERLAKLNQILRIEEELGSNAIYAGEDFRKSVTL.

2 residues coordinate substrate: His-159 and Glu-168. Glu-211 functions as the Proton donor in the catalytic mechanism. Residues Asp-246, Glu-297, and Asp-322 each contribute to the Mg(2+) site. Glu-297 and Asp-322 together coordinate substrate. The active-site Proton acceptor is the Lys-347. Residues 374–377 (SHRS) and Lys-398 each bind substrate.

This sequence belongs to the enolase family. As to quaternary structure, homodimer. It depends on Mg(2+) as a cofactor.

The protein resides in the cytoplasm. The catalysed reaction is (2R)-2-phosphoglycerate = phosphoenolpyruvate + H2O. Its pathway is carbohydrate degradation; glycolysis; pyruvate from D-glyceraldehyde 3-phosphate: step 4/5. This is Enolase (ENO1) from Cryphonectria parasitica (Chestnut blight fungus).